The primary structure comprises 63 residues: UPF0370 protein PC1_1167 (63 aa).

A helical transmembrane segment spans residues tryptophan 3 to isoleucine 23. Residues asparagine 37 to proline 63 are disordered.

It belongs to the UPF0370 family.

The protein localises to the cell membrane. In Pectobacterium carotovorum subsp. carotovorum (strain PC1), this protein is UPF0370 protein PC1_1167.